We begin with the raw amino-acid sequence, 165 residues long: MDPVNFIKTYAPRGSIIFINYTMSLTSHLNPSIEKHVGIYYGTLLSEHLVVESTYRKGVRIVPLDSFFEGYLSAKVYMLENIQVMKIAADTSLTLLGIPYGFGHDRMYCFKLVADCYKNAGIDTSSKRILGKDIFLSQNFTDDNRWIKIYDSNNLTFWQIDYLKG.

The protein belongs to the orthopoxvirus OPG091 family.

It localises to the virion. The protein localises to the host cytoplasm. In terms of biological role, contributes to vaccinia virus virulence in mice but not to replication in cell culture. The protein is Protein OPG091 (OPG091) of Vaccinia virus (strain Western Reserve) (VACV).